The sequence spans 686 residues: Glycine--tRNA ligase beta subunit (686 aa).

Positions 65–99 (ALSEEKRGPSVERAKDENGEWSKAAQGFARGQGAT) are disordered. The span at 67–84 (SEEKRGPSVERAKDENGE) shows a compositional bias: basic and acidic residues.

This sequence belongs to the class-II aminoacyl-tRNA synthetase family. Tetramer of two alpha and two beta subunits.

It is found in the cytoplasm. The catalysed reaction is tRNA(Gly) + glycine + ATP = glycyl-tRNA(Gly) + AMP + diphosphate. This chain is Glycine--tRNA ligase beta subunit, found in Leuconostoc citreum (strain KM20).